The primary structure comprises 298 residues: ATP phosphoribosyltransferase (298 aa).

This sequence belongs to the ATP phosphoribosyltransferase family. Long subfamily. It depends on Mg(2+) as a cofactor.

It is found in the cytoplasm. The enzyme catalyses 1-(5-phospho-beta-D-ribosyl)-ATP + diphosphate = 5-phospho-alpha-D-ribose 1-diphosphate + ATP. Its pathway is amino-acid biosynthesis; L-histidine biosynthesis; L-histidine from 5-phospho-alpha-D-ribose 1-diphosphate: step 1/9. With respect to regulation, feedback inhibited by histidine. In terms of biological role, catalyzes the condensation of ATP and 5-phosphoribose 1-diphosphate to form N'-(5'-phosphoribosyl)-ATP (PR-ATP). Has a crucial role in the pathway because the rate of histidine biosynthesis seems to be controlled primarily by regulation of HisG enzymatic activity. In Psychromonas ingrahamii (strain DSM 17664 / CCUG 51855 / 37), this protein is ATP phosphoribosyltransferase.